The following is a 384-amino-acid chain: S-adenosylmethionine synthase (384 aa).

His-15 lines the ATP pocket. Mg(2+) is bound at residue Asp-17. Glu-43 contacts K(+). L-methionine-binding residues include Glu-56 and Gln-99. The interval 99-109 (QSPDINQGVDR) is flexible loop. Residues 164 to 166 (DAK), 230 to 231 (RF), Asp-239, 245 to 246 (RK), Ala-262, and Lys-266 each bind ATP. An L-methionine-binding site is contributed by Asp-239. Lys-270 is a binding site for L-methionine.

The protein belongs to the AdoMet synthase family. As to quaternary structure, homotetramer; dimer of dimers. Mg(2+) is required as a cofactor. K(+) serves as cofactor.

The protein localises to the cytoplasm. The catalysed reaction is L-methionine + ATP + H2O = S-adenosyl-L-methionine + phosphate + diphosphate. Its pathway is amino-acid biosynthesis; S-adenosyl-L-methionine biosynthesis; S-adenosyl-L-methionine from L-methionine: step 1/1. Catalyzes the formation of S-adenosylmethionine (AdoMet) from methionine and ATP. The overall synthetic reaction is composed of two sequential steps, AdoMet formation and the subsequent tripolyphosphate hydrolysis which occurs prior to release of AdoMet from the enzyme. The protein is S-adenosylmethionine synthase of Yersinia pseudotuberculosis serotype IB (strain PB1/+).